The primary structure comprises 355 residues: Methyltransferase FUS9 (355 aa).

Residues Tyr-18, Asn-63, Asp-86, Ser-123, and Phe-124 each contribute to the S-adenosyl-L-homocysteine site. Mg(2+) is bound at residue Phe-231.

This sequence belongs to the methyltransferase superfamily. Type-7 methyltransferase family. Requires Mg(2+) as cofactor.

Its pathway is mycotoxin biosynthesis. In terms of biological role, methyltransferase; part of the gene cluster that mediates the biosynthesis of the mycotoxin fusarin C. Within the cluster, FUS1, FUS2, FUS8 and FUS9 are sufficient for fusarin production. The roles of the other FUS members are yet undetermined. The fusarin C synthetase FUS1 is responsible for the condensation of one acetyl-coenzyme A (CoA) unit with six malonyl-CoA units and the amide linkage of the arising heptaketide and homoserine, subsequently releasing the first intermediate, prefusarin, as an alcohol with an open ring structure. The cytochrome P450 monooxygenase FUS8 participates in multiple oxidation processes at carbon C-20 and is able to use the FUS1 product as substrate, resulting in formation of 20-hydroxy-prefusarin. This reaction seems to be essential before the 2-pyrrolidone ring closure can be catalyzed by FUS2, generating 20-hydroxy-fusarin. FUS8 is able to further oxidizes carbon C-20 after ring closure, resulting in the formation of carboxy-fusarin C. As the last step, FUS9 methylates the hydroxyl group at C-21 to generate fusarin C. Fusarin C can then rearrange to epi-fusarin C, the (z)-isomers, and fusarin A and fusarin D. In Gibberella moniliformis (strain M3125 / FGSC 7600) (Maize ear and stalk rot fungus), this protein is Methyltransferase FUS9.